The primary structure comprises 487 residues: Aromatic-L-amino-acid decarboxylase (487 aa).

At methionine 1 the chain carries N-acetylmethionine. Tandem repeats lie at residues 58–115 and 118–178. Residues 58 to 178 are 2 X approximate tandem repeats; it reads EDIEKIIMPG…AASPELMQAA (121 aa). Threonine 82 provides a ligand contact to substrate. Alanine 148 and serine 149 together coordinate pyridoxal 5'-phosphate. Position 192 (histidine 192) interacts with substrate. Residues threonine 246 and asparagine 300 each contribute to the pyridoxal 5'-phosphate site. Lysine 303 carries the post-translational modification N6-(pyridoxal phosphate)lysine.

Belongs to the group II decarboxylase family. As to quaternary structure, homodimer. Pyridoxal 5'-phosphate serves as cofactor.

It carries out the reaction L-dopa + H(+) = dopamine + CO2. The enzyme catalyses 5-hydroxy-L-tryptophan + H(+) = serotonin + CO2. It participates in catecholamine biosynthesis; dopamine biosynthesis; dopamine from L-tyrosine: step 2/2. Its function is as follows. Catalyzes the decarboxylation of L-3,4-dihydroxyphenylalanine (DOPA) to dopamine and L-5-hydroxytryptophan to serotonin. The chain is Aromatic-L-amino-acid decarboxylase (DDC) from Bos taurus (Bovine).